Consider the following 297-residue polypeptide: ATP synthase gamma chain (297 aa).

It belongs to the ATPase gamma chain family. As to quaternary structure, F-type ATPases have 2 components, CF(1) - the catalytic core - and CF(0) - the membrane proton channel. CF(1) has five subunits: alpha(3), beta(3), gamma(1), delta(1), epsilon(1). CF(0) has three main subunits: a, b and c.

It is found in the cell membrane. Functionally, produces ATP from ADP in the presence of a proton gradient across the membrane. The gamma chain is believed to be important in regulating ATPase activity and the flow of protons through the CF(0) complex. This Beutenbergia cavernae (strain ATCC BAA-8 / DSM 12333 / CCUG 43141 / JCM 11478 / NBRC 16432 / NCIMB 13614 / HKI 0122) protein is ATP synthase gamma chain.